Reading from the N-terminus, the 166-residue chain is Photosystem I assembly protein Ycf3 (166 aa).

TPR repeat units follow at residues A35 to P68, S72 to L105, and G120 to N153.

This sequence belongs to the Ycf3 family.

It localises to the plastid. The protein localises to the chloroplast thylakoid membrane. In terms of biological role, essential for the assembly of the photosystem I (PSI) complex. May act as a chaperone-like factor to guide the assembly of the PSI subunits. This chain is Photosystem I assembly protein Ycf3, found in Ostreococcus tauri.